Consider the following 207-residue polypeptide: Small ribosomal subunit protein uS3 (207 aa).

A KH type-2 domain is found at 17–86 (IDEYLEKELR…NPQIEVEEIK (70 aa)).

Belongs to the universal ribosomal protein uS3 family. As to quaternary structure, part of the 30S ribosomal subunit.

Its function is as follows. Binds the lower part of the 30S subunit head. The sequence is that of Small ribosomal subunit protein uS3 from Thermococcus sibiricus (strain DSM 12597 / MM 739).